We begin with the raw amino-acid sequence, 106 residues long: UPF0213 protein KPN78578_35340 (106 aa).

Positions 13-88 constitute a GIY-YIG domain; it reads VCWFLYLIRT…KQLTKREKER (76 aa).

This sequence belongs to the UPF0213 family.

This chain is UPF0213 protein KPN78578_35340, found in Klebsiella pneumoniae subsp. pneumoniae (strain ATCC 700721 / MGH 78578).